The primary structure comprises 642 residues: Poly(A) RNA polymerase protein 1 (642 aa).

Disordered regions lie at residues 1-29 (MTRL…KSSF) and 84-104 (TSSE…LEDN). The segment covering 88–100 (DEQRAESSKRNNS) has biased composition (basic and acidic residues). Residues aspartate 233 and aspartate 235 each coordinate Mg(2+). 4 residues coordinate ATP: glycine 298, lysine 323, asparagine 428, and arginine 432. The PAP-associated domain maps to 368 to 428 (NLGVLLIDFF…AIQDPGDPNN (61 aa)). Residues 535-642 (AKKKQKAKKD…DYWLSKGQAL (108 aa)) are disordered. The span at 578 to 588 (QGSLLHQNNLS) shows a compositional bias: polar residues. A phosphoserine mark is found at serine 596 and serine 602. The segment covering 604–635 (QDQKGRDTPSGQDEKSPLETKTVDAQTRRDYW) has biased composition (basic and acidic residues).

Belongs to the DNA polymerase type-B-like family. In terms of assembly, component of the TRAMP5 complex composed of at least AIR1, MTR4 and TFR5. Interacts with POL2, DPB2 and DPB11. Mg(2+) serves as cofactor. Mn(2+) is required as a cofactor.

Its subcellular location is the nucleus. The protein resides in the nucleolus. It carries out the reaction RNA(n) + ATP = RNA(n)-3'-adenine ribonucleotide + diphosphate. Functionally, catalytic subunit of the TRAMP5 complex which has a poly(A) RNA polymerase activity and is involved in a post-transcriptional quality control mechanism limiting inappropriate expression of genetic information. Polyadenylation is required for the degradative activity of the exosome on several of its nuclear RNA substrates like cryptic transcripts generated by RNA polymerase II and III, or hypomethylated pre-tRNAi-Met. Polyadenylates RNA processing and degradation intermediates of snRNAs, snoRNAs and mRNAs that accumulate in strains lacking a functional exosome. TRF5 is also required for proper nuclear division in mitosis and sister chromatid cohesion. Involved in the regulation of histone mRNA levels. May mediate mitotic chromosome condensation. The polypeptide is Poly(A) RNA polymerase protein 1 (TRF5) (Saccharomyces cerevisiae (strain ATCC 204508 / S288c) (Baker's yeast)).